The sequence spans 324 residues: tRNA uridine(34) hydroxylase (324 aa).

The 97-residue stretch at 122 to 218 folds into the Rhodanese domain; it reads QENRCLILDV…YGQQVGTGKW (97 aa). Catalysis depends on cysteine 178, which acts as the Cysteine persulfide intermediate.

This sequence belongs to the TrhO family.

It catalyses the reaction uridine(34) in tRNA + AH2 + O2 = 5-hydroxyuridine(34) in tRNA + A + H2O. Catalyzes oxygen-dependent 5-hydroxyuridine (ho5U) modification at position 34 in tRNAs. In Chlamydia pneumoniae (Chlamydophila pneumoniae), this protein is tRNA uridine(34) hydroxylase.